The primary structure comprises 172 residues: Ribosome maturation factor RimM (172 aa).

Residues alanine 95–leucine 168 enclose the PRC barrel domain.

This sequence belongs to the RimM family. In terms of assembly, binds ribosomal protein uS19.

It localises to the cytoplasm. An accessory protein needed during the final step in the assembly of 30S ribosomal subunit, possibly for assembly of the head region. Essential for efficient processing of 16S rRNA. May be needed both before and after RbfA during the maturation of 16S rRNA. It has affinity for free ribosomal 30S subunits but not for 70S ribosomes. The sequence is that of Ribosome maturation factor RimM from Streptococcus equi subsp. zooepidemicus (strain H70).